Reading from the N-terminus, the 282-residue chain is Formamidopyrimidine-DNA glycosylase (282 aa).

P2 acts as the Schiff-base intermediate with DNA in catalysis. Residue E3 is the Proton donor of the active site. K61 serves as the catalytic Proton donor; for beta-elimination activity. 3 residues coordinate DNA: H93, R112, and K158. The FPG-type zinc-finger motif lies at 244 to 278 (DAYGREGEGCRRCGAVMHREKFMNRSSFYCPRCQP). Residue R268 is the Proton donor; for delta-elimination activity of the active site.

It belongs to the FPG family. As to quaternary structure, monomer. It depends on Zn(2+) as a cofactor.

It carries out the reaction Hydrolysis of DNA containing ring-opened 7-methylguanine residues, releasing 2,6-diamino-4-hydroxy-5-(N-methyl)formamidopyrimidine.. The enzyme catalyses 2'-deoxyribonucleotide-(2'-deoxyribose 5'-phosphate)-2'-deoxyribonucleotide-DNA = a 3'-end 2'-deoxyribonucleotide-(2,3-dehydro-2,3-deoxyribose 5'-phosphate)-DNA + a 5'-end 5'-phospho-2'-deoxyribonucleoside-DNA + H(+). Involved in base excision repair of DNA damaged by oxidation or by mutagenic agents. Acts as a DNA glycosylase that recognizes and removes damaged bases. Has a preference for oxidized purines, such as 7,8-dihydro-8-oxoguanine (8-oxoG). Has AP (apurinic/apyrimidinic) lyase activity and introduces nicks in the DNA strand. Cleaves the DNA backbone by beta-delta elimination to generate a single-strand break at the site of the removed base with both 3'- and 5'-phosphates. This chain is Formamidopyrimidine-DNA glycosylase, found in Mycobacterium leprae (strain Br4923).